Here is a 105-residue protein sequence, read N- to C-terminus: Protamine-2 (105 aa).

Residues 1–74 (MVRYRMRSPS…RRSCRRRRRH (74 aa)) form a disordered region. Phosphoserine is present on residues serine 8, serine 10, and serine 33. Residues 33-42 (SPERVEDYGR) are compositionally biased toward basic and acidic residues. A compositionally biased stretch (basic residues) spans 43–74 (THRGHHRHRRCSRKRLHRIHKRRRSCRRRRRH).

The protein belongs to the protamine P2 family. As to quaternary structure, interacts with TDRP. Proteolytic processing into mature chains is required for histone eviction during spermatogenesis. Transition proteins (TNP1 and TNP2) are required for processing. Testis.

The protein resides in the nucleus. The protein localises to the chromosome. Its function is as follows. Protamines substitute for histones in the chromatin of sperm during the haploid phase of spermatogenesis. They compact sperm DNA into a highly condensed, stable and inactive complex. The polypeptide is Protamine-2 (Prm2) (Rattus fuscipes (Bush rat)).